Reading from the N-terminus, the 345-residue chain is Phenylalanine--tRNA ligase alpha subunit (345 aa).

Residue Glu259 coordinates Mg(2+).

It belongs to the class-II aminoacyl-tRNA synthetase family. Phe-tRNA synthetase alpha subunit type 1 subfamily. Tetramer of two alpha and two beta subunits. The cofactor is Mg(2+).

It is found in the cytoplasm. It catalyses the reaction tRNA(Phe) + L-phenylalanine + ATP = L-phenylalanyl-tRNA(Phe) + AMP + diphosphate + H(+). This chain is Phenylalanine--tRNA ligase alpha subunit, found in Lactococcus lactis subsp. cremoris (strain SK11).